The primary structure comprises 205 residues: Protein N-terminal glutamine amidohydrolase (205 aa).

Residues Cys-20, His-74, and Asp-90 contribute to the active site.

Belongs to the NTAQ1 family. In terms of assembly, monomer.

It catalyses the reaction N-terminal L-glutaminyl-[protein] + H2O = N-terminal L-glutamyl-[protein] + NH4(+). Mediates the side-chain deamidation of N-terminal glutamine residues to glutamate, an important step in N-end rule pathway of protein degradation. Conversion of the resulting N-terminal glutamine to glutamate renders the protein susceptible to arginylation, polyubiquitination and degradation as specified by the N-end rule. Does not act on substrates with internal or C-terminal glutamine and does not act on non-glutamine residues in any position. This is Protein N-terminal glutamine amidohydrolase (tun) from Drosophila grimshawi (Hawaiian fruit fly).